Consider the following 213-residue polypeptide: N-(5'-phosphoribosyl)anthranilate isomerase (213 aa).

Belongs to the TrpF family.

The enzyme catalyses N-(5-phospho-beta-D-ribosyl)anthranilate = 1-(2-carboxyphenylamino)-1-deoxy-D-ribulose 5-phosphate. Its pathway is amino-acid biosynthesis; L-tryptophan biosynthesis; L-tryptophan from chorismate: step 3/5. This is N-(5'-phosphoribosyl)anthranilate isomerase from Methylibium petroleiphilum (strain ATCC BAA-1232 / LMG 22953 / PM1).